The primary structure comprises 751 residues: Semaphorin-3C (751 aa).

An N-terminal signal peptide occupies residues 1–20 (MAFRAICVLVGVFICSICVR). The Sema domain maps to 28-511 (RVYLTFDELR…SNEGVSQVSL (484 aa)). A glycan (N-linked (GlcNAc...) asparagine) is linked at Asn81. A disulfide bridge connects residues Cys101 and Cys112. Asn123 is a glycosylation site (N-linked (GlcNAc...) asparagine). Cys130 and Cys139 are joined by a disulfide. N-linked (GlcNAc...) asparagine glycans are attached at residues Asn252 and Asn268. Cystine bridges form between Cys266–Cys378 and Cys290–Cys338. N-linked (GlcNAc...) asparagine glycosylation occurs at Asn465. Cys514 and Cys532 form a disulfide bridge. Residues 571-655 (AYRNAAEIVQ…TENSFKQTIA (85 aa)) form the Ig-like C2-type domain. N-linked (GlcNAc...) asparagine glycosylation is found at Asn585 and Asn586. A disulfide bond links Cys643 and Cys709.

This sequence belongs to the semaphorin family. As to quaternary structure, interacts with PLXND1.

The protein resides in the secreted. Functionally, binds to plexin family members and plays an important role in the regulation of developmental processes. Required for normal cardiovascular development during embryogenesis. Functions as attractant for growing axons, and thereby plays an important role in axon growth and axon guidance. This is Semaphorin-3C (Sema3c) from Mus musculus (Mouse).